Reading from the N-terminus, the 412-residue chain is Membrane fusion protein MtrC (412 aa).

The first 24 residues, 1-24 (MAFYASKAMRAAALAAAVALALSS), serve as a signal peptide directing secretion. Cys25 carries the N-palmitoyl cysteine lipid modification. Cys25 carries S-diacylglycerol cysteine lipidation. The interval 377–412 (AKKVTPKEWAPSENQAAAPQAGVQTASEAKPASEAK) is disordered. Positions 388–403 (SENQAAAPQAGVQTAS) are enriched in polar residues.

This sequence belongs to the membrane fusion protein (MFP) (TC 8.A.1) family.

Its subcellular location is the cell inner membrane. In terms of biological role, cell membrane lipoprotein, involved in cell membrane permeability to hydrophobic compounds such as antibiotics, dyes and detergents. This is Membrane fusion protein MtrC (mtrC) from Neisseria gonorrhoeae.